The primary structure comprises 193 residues: dTTP/UTP pyrophosphatase (193 aa).

Aspartate 77 acts as the Proton acceptor in catalysis.

It belongs to the Maf family. YhdE subfamily. Requires a divalent metal cation as cofactor.

The protein resides in the cytoplasm. The catalysed reaction is dTTP + H2O = dTMP + diphosphate + H(+). It carries out the reaction UTP + H2O = UMP + diphosphate + H(+). Nucleoside triphosphate pyrophosphatase that hydrolyzes dTTP and UTP. May have a dual role in cell division arrest and in preventing the incorporation of modified nucleotides into cellular nucleic acids. The sequence is that of dTTP/UTP pyrophosphatase from Bacteroides fragilis (strain ATCC 25285 / DSM 2151 / CCUG 4856 / JCM 11019 / LMG 10263 / NCTC 9343 / Onslow / VPI 2553 / EN-2).